The sequence spans 53 residues: Insulin (53 aa).

The propeptide at 1–30 is c peptide; the sequence is DVEPLLGFLSPKSGQENEVDDFPYKGQGEL. A disulfide bridge links Cys-38 with Cys-43.

The protein belongs to the insulin family. Heterodimer of a B chain and an A chain linked by two disulfide bonds.

It localises to the secreted. In terms of biological role, insulin decreases blood glucose concentration. It increases cell permeability to monosaccharides, amino acids and fatty acids. It accelerates glycolysis, the pentose phosphate cycle, and glycogen synthesis in liver. This chain is Insulin (ins), found in Anguilla anguilla (European freshwater eel).